A 275-amino-acid chain; its full sequence is Exosome complex component Rrp42 (275 aa).

It belongs to the RNase PH family. Rrp42 subfamily. In terms of assembly, component of the archaeal exosome complex. Forms a hexameric ring-like arrangement composed of 3 Rrp41-Rrp42 heterodimers. The hexameric ring associates with a trimer of Rrp4 and/or Csl4 subunits.

Its subcellular location is the cytoplasm. Functionally, non-catalytic component of the exosome, which is a complex involved in RNA degradation. Contributes to the structuring of the Rrp41 active site. The polypeptide is Exosome complex component Rrp42 (Sulfurisphaera tokodaii (strain DSM 16993 / JCM 10545 / NBRC 100140 / 7) (Sulfolobus tokodaii)).